The chain runs to 715 residues: Metastasis-associated protein MTA1 (715 aa).

The BAH domain maps to 1 to 164 (MAANMYRVGD…PQQKTLLADK (164 aa)). In terms of domain architecture, ELM2 spans 165 to 276 (GEIRVGNRYQ…KAISALVPQG (112 aa)). Lysine 182 is covalently cross-linked (Glycyl lysine isopeptide (Lys-Gly) (interchain with G-Cter in ubiquitin)). The region spanning 283–335 (DEMEEWSASEANLFEEALEKYGKDFTDIQQDFLPWKSLTSIIEYYYMWKTTDR) is the SANT domain. Serine 386 bears the Phosphoserine mark. Residues 393 to 420 (CESCYTTQSYQWYSWGPPNMQCRLCASC) form a GATA-type; atypical zinc finger. A disordered region spans residues 437-460 (DGERPGPNRNNMSPHGIPARSSGS). Serine 449 bears the Phosphoserine mark. Lysine 509 participates in a covalent cross-link: Glycyl lysine isopeptide (Lys-Gly) (interchain with G-Cter in SUMO2 and SUMO3). Serine 522 carries the post-translational modification Phosphoserine. Over residues 542 to 552 (ETHPRPPKPDP) the composition is skewed to basic and acidic residues. The tract at residues 542-590 (ETHPRPPKPDPVKSSSSVLSSLTPAKSAPVINNGSPTILGKRSYEQHNG) is disordered. Residues 545–552 (PRPPKPDP) carry the SH3-binding motif. Lysine 549 participates in a covalent cross-link: Glycyl lysine isopeptide (Lys-Gly) (interchain with G-Cter in SUMO2). The segment covering 553–565 (VKSSSSVLSSLTP) has biased composition (low complexity). Phosphothreonine is present on threonine 564. Serine 576 carries the post-translational modification Phosphoserine. Residue threonine 578 is modified to Phosphothreonine. Lysine 626 carries the N6-acetyllysine; alternate modification. Lysine 626 participates in a covalent cross-link: Glycyl lysine isopeptide (Lys-Gly) (interchain with G-Cter in ubiquitin); alternate. Serine 639 bears the Phosphoserine mark. The interval 656 to 686 (DVFYMATEETRKIRKLLSSSETKRAARRPYK) is interaction with RBBP4. The interval 673 to 715 (SSSETKRAARRPYKPIALRQSQALPLRPPPPAPVNDEPIVIED) is disordered. An SH3-binding motif is present at residues 696 to 705 (LPLRPPPPAP). Positions 711–715 (IVIED) match the SUMO interaction motif 1 (SIM); crucial for efficient sumoylation motif.

It belongs to the metastasis-associated protein family. As to quaternary structure, component of the nucleosome remodeling and deacetylase (NuRD) repressor complex, composed of core proteins MTA1, MTA2, MTA3, RBBP4, RBBP7, HDAC1, HDAC2, MBD2, MBD3, and peripherally associated proteins CDK2AP1, CDK2AP2, GATAD2A, GATAD2B, CHD3, CHD4 and CHD5. The exact stoichiometry of the NuRD complex is unknown, and some subunits such as MBD2 and MBD3, GATAD2A and GATAD2B, and CHD3, CHD4 and CHD5 define mutually exclusive NuRD complexes. Interacts with RBBP4; the interaction is direct. Interacts with BMAL1. Interacts with CLOCK. Interacts with COP1. Interacts with CSNK1G2 in the cytoplasm. Interacts with EP300. Interacts with HDAC2. Interacts with ITGB3BP/CENPR. Interacts with MBD3L2. Interacts with MDM2. Interacts with NACC2. Interacts with p53/TP53. Interacts with PIAS1. Interacts with PIAS3. Interacts with PIAS4. Interacts with PWWP2A. Interacts with PWWP2B. Interacts with SENP1. Interacts with SENP2. Interacts with SIX3; facilitates the binding of SIX3 to the core DNA motif of SIX3 promoter. Interacts with SUMO1. Interacts with SUMO2. Interacts with TFCP2L1; which is indispensable for TFCP2L1-mediated self-renewal-promoting effect and endoderm-inhibiting action. Interacts with TFAP2C. Interacts with TPR. Interacts with UBE2I/UBC9. Phosphorylation by CSNK1G2/CK1 triggered by estrogen enhances corepression of estrogen receptor (ER). Post-translationally, acetylation is essential for its transcriptional coactivator activity. In terms of processing, sumoylation positively regulates its transcriptional corepressor activity but does not affect the protein stability. Sumoylated preferentially by SUMO2 or SUMO3 than SUMO1. Sumoylation is enhanced by PIAS1/3/4 and preferentially sumoylated by SUMO2 in the presence of PIAS1/3/4. Desumoylated by SENP1. Ubiquitinated by COP1, which leads to proteasomal degradation. In terms of tissue distribution, widely expressed but not in skeletal muscle. Highly expressed in the brain, liver, kidney and cardiac muscle and in mammary tumors.

It localises to the nucleus. It is found in the nucleus envelope. The protein resides in the cytoplasm. The protein localises to the cytoskeleton. In terms of biological role, transcriptional coregulator which can act as both a transcriptional corepressor and coactivator. Acts as a component of the histone deacetylase NuRD complex which participates in the remodeling of chromatin. In the NuRD complex, regulates transcription of its targets by modifying the acetylation status of the target chromatin and cofactor accessibility to the target DNA. In conjunction with other components of NuRD, acts as a transcriptional corepressor of BRCA1, ESR1, TFF1 and CDKN1A. Acts as a transcriptional coactivator of BCAS3, PAX5 and SUMO2, independent of the NuRD complex. Stimulates the expression of WNT1 by inhibiting the expression of its transcriptional corepressor SIX3. Regulates p53-dependent and -independent DNA repair processes following genotoxic stress. Regulates the stability and function of p53/TP53 by inhibiting its ubiquitination by COP1 and MDM2 thereby regulating the p53-dependent DNA repair. Plays a role in the regulation of the circadian clock and is essential for the generation and maintenance of circadian rhythms under constant light and for normal entrainment of behavior to light-dark (LD) cycles. Positively regulates the CLOCK-BMAL1 heterodimer mediated transcriptional activation of its own transcription and the transcription of CRY1. Regulates deacetylation of BMAL1 by regulating SIRT1 expression, resulting in derepressing CRY1-mediated transcription repression. With Tfcp2l1, promotes establishment and maintenance of pluripotency in embryonic stem cells (ESCs) and inhibits endoderm differentiation. This Mus musculus (Mouse) protein is Metastasis-associated protein MTA1 (Mta1).